Reading from the N-terminus, the 367-residue chain is tRNA/tmRNA (uracil-C(5))-methyltransferase (367 aa).

S-adenosyl-L-methionine is bound by residues glutamine 190, tyrosine 218, asparagine 223, glutamate 239, and aspartate 299. The active-site Nucleophile is cysteine 324. The Proton acceptor role is filled by glutamate 358.

It belongs to the class I-like SAM-binding methyltransferase superfamily. RNA M5U methyltransferase family. TrmA subfamily.

The enzyme catalyses uridine(54) in tRNA + S-adenosyl-L-methionine = 5-methyluridine(54) in tRNA + S-adenosyl-L-homocysteine + H(+). It catalyses the reaction uridine(341) in tmRNA + S-adenosyl-L-methionine = 5-methyluridine(341) in tmRNA + S-adenosyl-L-homocysteine + H(+). Dual-specificity methyltransferase that catalyzes the formation of 5-methyluridine at position 54 (m5U54) in all tRNAs, and that of position 341 (m5U341) in tmRNA (transfer-mRNA). The polypeptide is tRNA/tmRNA (uracil-C(5))-methyltransferase (Yersinia pestis bv. Antiqua (strain Antiqua)).